The sequence spans 167 residues: MPLRRCRAWRGHSQPGTGSRSNEIPKHRNVVAFLDDFSHVVCRGPTEQRVIIAAVGKLVDRIAQTGKVAGDQVAVFVATERFKQVKPSDQAGLRDADGLEQAGKLAVDVLQLELLDWLTESINGGSDFCLIILKIGEVDPMALILAKFVDSASPLKPAVLIHRAPAF.

Residues 1 to 10 (MPLRRCRAWR) show a composition bias toward basic residues. Residues 1–23 (MPLRRCRAWRGHSQPGTGSRSNE) form a disordered region.

This is an uncharacterized protein from Sinorhizobium fredii (strain NBRC 101917 / NGR234).